The sequence spans 261 residues: Transmembrane and immunoglobulin domain-containing protein 1 (261 aa).

The first 27 residues, 1-27 (MAQKTSGLIQRCRFLLLMILFLPHVMT), serve as a signal peptide directing secretion. One can recognise an Ig-like C2-type 1 domain in the interval 28-114 (SSVLSVNGKT…LQRNQSVSIS (87 aa)). Over 28–219 (SSVLSVNGKT…IVKDKGSTVP (192 aa)) the chain is Extracellular. Cys-54 and Cys-103 are oxidised to a cystine. N-linked (GlcNAc...) asparagine glycosylation is found at Asn-83, Asn-108, Asn-118, and Asn-189. The 87-residue stretch at 122–208 (PPLLSGNDFQ…LIETKTKDFH (87 aa)) folds into the Ig-like C2-type 2 domain. Cys-143 and Cys-194 are disulfide-bonded. The chain crosses the membrane as a helical span at residues 220-240 (IEPIIAACVVVFLTLVFGVIA). The Cytoplasmic portion of the chain corresponds to 241–261 (RRKRIMKLCRKDQGPQCRTAL).

In terms of assembly, homodimer. N-glycosylated.

Its subcellular location is the cell membrane. The protein localises to the cytoplasm. In terms of biological role, may control cell-cell adhesion, cell migration and proliferation, cell morphology, and protects renal epithelial cells from oxidative cell injury to promote cell survival. The chain is Transmembrane and immunoglobulin domain-containing protein 1 from Bos taurus (Bovine).